The following is an 867-amino-acid chain: Probable potassium transporter 15 (867 aa).

Residues 1–13 are compositionally biased toward low complexity; sequence MAASSSSSASASA. Positions 1–88 are disordered; that stretch reads MAASSSSSAS…EGEGEDGEKQ (88 aa). At 1 to 124 the chain is on the cytoplasmic side; sequence MAASSSSSAS…DSEEFDFGRT (124 aa). Acidic residues predominate over residues 32–44; sequence TEEDDEGEEDGDT. A compositionally biased stretch (low complexity) spans 45 to 54; that stretch reads VEAAAAAVGA. Residues 63-84 are compositionally biased toward acidic residues; it reads SEEEEDEEDGGGGGEGEGEGED. Residues 125-145 traverse the membrane as a helical segment; it reads MFLALQTLAVVFGDIGISPLY. The Extracellular segment spans residues 146 to 167; the sequence is TFDVMFSKYPILGEEDVLGALS. The chain crosses the membrane as a helical span at residues 168–188; the sequence is LVLYTLISMPLVKYVLVVLWA. The Cytoplasmic portion of the chain corresponds to 189-252; sequence NDDGEGGIFA…KLESSLLLKK (64 aa). The chain crosses the membrane as a helical span at residues 253–273; sequence LLLGLVLFGTAMFISNGVITP. Residues 274 to 285 lie on the Extracellular side of the membrane; sequence AMSVLSAVSGLK. Residues 286–306 form a helical membrane-spanning segment; the sequence is VGIPNASQGLVVMISVVLLVI. Residues 307–317 are Cytoplasmic-facing; that stretch reads LYSVQRYATSK. The chain crosses the membrane as a helical span at residues 318 to 338; that stretch reads MGFALGPSLLIWFCCLGGIGI. Over 339–365 the chain is Extracellular; the sequence is YNLSTYGPAAFKAFNPLYIIYYFGRNP. N-linked (GlcNAc...) asparagine glycosylation occurs at Asn340. Residues 366–386 form a helical membrane-spanning segment; that stretch reads FQAWLSLAGCLLCATGSEAIF. Residues 387-400 lie on the Cytoplasmic side of the membrane; sequence ANLSYFPVRYVQSM. Residues 401-421 form a helical membrane-spanning segment; the sequence is FALLVLPCLVLAYLGQGAFLI. Topologically, residues 422 to 433 are extracellular; sequence ANQNSSEQIFFS. An N-linked (GlcNAc...) asparagine glycan is attached at Asn425. The chain crosses the membrane as a helical span at residues 434-454; sequence SIPSGVFWPVFLIANLAALIA. At 455–490 the chain is on the cytoplasmic side; the sequence is SRTMTTAIFQCLKQSIALGCFPRLKIIHTSRKFMAK. Residues 491–511 traverse the membrane as a helical segment; that stretch reads IYIPVVNWFLLFSCLGFILLF. At 512–522 the chain is on the extracellular side; sequence RSIYDVGNAYA. The chain crosses the membrane as a helical span at residues 523–543; it reads IAELGVMIMATVYVTIIMLLI. At 544-545 the chain is on the cytoplasmic side; it reads WE. The chain crosses the membrane as a helical span at residues 546 to 566; the sequence is TSIVKVLSFVITFLSLELVFF. The Extracellular segment spans residues 567-572; the sequence is SSSLSS. Residues 573-593 traverse the membrane as a helical segment; sequence VGDGGWALIIFASGILMVMFI. Topologically, residues 594-867 are cytoplasmic; the sequence is WNYGSKLKYD…VMQVRLTSYV (274 aa).

It belongs to the HAK/KUP transporter (TC 2.A.72.3) family.

The protein localises to the membrane. High-affinity potassium transporter. In Oryza sativa subsp. japonica (Rice), this protein is Probable potassium transporter 15 (HAK15).